The following is a 266-amino-acid chain: Undecaprenyl-diphosphatase (266 aa).

8 helical membrane passes run 1–21 (MDFL…FIPV), 39–59 (PGSS…FWYF), 86–106 (SIFI…LFVT), 117–137 (FSIA…DIST), 153–173 (FIGI…GATI), 190–210 (SFLL…ITSI), 216–236 (FPFL…LLAI), and 246–266 (NGLK…ILNL).

It belongs to the UppP family.

The protein resides in the cell inner membrane. The catalysed reaction is di-trans,octa-cis-undecaprenyl diphosphate + H2O = di-trans,octa-cis-undecaprenyl phosphate + phosphate + H(+). Catalyzes the dephosphorylation of undecaprenyl diphosphate (UPP). Confers resistance to bacitracin. This chain is Undecaprenyl-diphosphatase, found in Prochlorococcus marinus (strain MIT 9515).